Here is a 651-residue protein sequence, read N- to C-terminus: Cysteine-rich receptor-like protein kinase 42 (651 aa).

Residues 1–28 (MRCLTKTRSFHYVIIFYSFFFLPFLSSS) form the signal peptide. Topologically, residues 29–251 (SDDQRTTVSG…HHKFHVLFNK (223 aa)) are extracellular. Gnk2-homologous domains follow at residues 35-135 (TVSG…TYEF) and 137-236 (DESV…DHKF). N-linked (GlcNAc...) asparagine glycans are attached at residues Asn-79 and Asn-151. A helical membrane pass occupies residues 252-272 (GVIVAIVLTTSAFVMLILLAT). Residues 273 to 651 (YVIMTKVSKT…SSESSTTRTI (379 aa)) are Cytoplasmic-facing. The 290-residue stretch at 315–604 (FSHKKMLGQG…IPSPTSPPFL (290 aa)) folds into the Protein kinase domain. ATP is bound by residues 321 to 329 (LGQGGNGTV) and Lys-343. At Tyr-388 the chain carries Phosphotyrosine. Asp-440 (proton acceptor) is an active-site residue. Phosphoserine occurs at positions 444 and 473. Phosphothreonine is present on residues Thr-474 and Thr-479. At Tyr-487 the chain carries Phosphotyrosine.

This sequence belongs to the protein kinase superfamily. Ser/Thr protein kinase family. CRK subfamily.

The protein resides in the membrane. The enzyme catalyses L-seryl-[protein] + ATP = O-phospho-L-seryl-[protein] + ADP + H(+). It carries out the reaction L-threonyl-[protein] + ATP = O-phospho-L-threonyl-[protein] + ADP + H(+). The sequence is that of Cysteine-rich receptor-like protein kinase 42 (CRK42) from Arabidopsis thaliana (Mouse-ear cress).